Consider the following 365-residue polypeptide: Serine/threonine-protein phosphatase 2A activator 1 (365 aa).

A disordered region spans residues 321-349 (YEAPSETSEKPAAGTAHTTTTTMPPPRMT). A compositionally biased stretch (low complexity) spans 331 to 342 (PAAGTAHTTTTT).

It belongs to the PTPA-type PPIase family.

Its subcellular location is the cytoplasm. The protein localises to the nucleus. It carries out the reaction [protein]-peptidylproline (omega=180) = [protein]-peptidylproline (omega=0). Its function is as follows. PPIases accelerate the folding of proteins. It catalyzes the cis-trans isomerization of proline imidic peptide bonds in oligopeptides. Acts as a regulatory subunit for PP2A-like phosphatases modulating their activity or substrate specificity, probably by inducing a conformational change in the catalytic subunit, a direct target of the PPIase. Can reactivate inactive phosphatase PP2A-phosphatase methylesterase complexes (PP2Ai) in presence of ATP and Mg(2+) by dissociating the inactive form from the complex. This Eremothecium gossypii (strain ATCC 10895 / CBS 109.51 / FGSC 9923 / NRRL Y-1056) (Yeast) protein is Serine/threonine-protein phosphatase 2A activator 1 (RRD1).